A 564-amino-acid polypeptide reads, in one-letter code: Beta-hexosaminidase subunit B2 (564 aa).

Residues 1–19 (MKLKFIFLILFFIIGNSIG) form the signal peptide. N-linked (GlcNAc...) asparagine glycans are attached at residues Asn43, Asn84, Asn303, and Asn347. Glu357 serves as the catalytic Proton donor. Residues Asn364, Asn377, Asn439, Asn524, and Asn551 are each glycosylated (N-linked (GlcNAc...) asparagine).

Belongs to the glycosyl hydrolase 20 family.

The protein localises to the lysosome. It carries out the reaction Hydrolysis of terminal non-reducing N-acetyl-D-hexosamine residues in N-acetyl-beta-D-hexosaminides.. Responsible for the degradation of GM2 gangliosides, and a variety of other molecules containing terminal N-acetyl hexosamines. This is Beta-hexosaminidase subunit B2 (hexb2) from Dictyostelium discoideum (Social amoeba).